The following is a 75-amino-acid chain: Putative membrane protein insertion efficiency factor (75 aa).

Belongs to the UPF0161 family.

It is found in the cell inner membrane. In terms of biological role, could be involved in insertion of integral membrane proteins into the membrane. The polypeptide is Putative membrane protein insertion efficiency factor (Leptospira biflexa serovar Patoc (strain Patoc 1 / ATCC 23582 / Paris)).